A 105-amino-acid polypeptide reads, in one-letter code: Pyrimidine/purine nucleoside phosphorylase (105 aa).

The protein belongs to the nucleoside phosphorylase PpnP family.

The catalysed reaction is a purine D-ribonucleoside + phosphate = a purine nucleobase + alpha-D-ribose 1-phosphate. It carries out the reaction adenosine + phosphate = alpha-D-ribose 1-phosphate + adenine. The enzyme catalyses cytidine + phosphate = cytosine + alpha-D-ribose 1-phosphate. It catalyses the reaction guanosine + phosphate = alpha-D-ribose 1-phosphate + guanine. The catalysed reaction is inosine + phosphate = alpha-D-ribose 1-phosphate + hypoxanthine. It carries out the reaction thymidine + phosphate = 2-deoxy-alpha-D-ribose 1-phosphate + thymine. The enzyme catalyses uridine + phosphate = alpha-D-ribose 1-phosphate + uracil. It catalyses the reaction xanthosine + phosphate = alpha-D-ribose 1-phosphate + xanthine. Catalyzes the phosphorolysis of diverse nucleosides, yielding D-ribose 1-phosphate and the respective free bases. Can use uridine, adenosine, guanosine, cytidine, thymidine, inosine and xanthosine as substrates. Also catalyzes the reverse reactions. The protein is Pyrimidine/purine nucleoside phosphorylase of Cupriavidus taiwanensis (strain DSM 17343 / BCRC 17206 / CCUG 44338 / CIP 107171 / LMG 19424 / R1) (Ralstonia taiwanensis (strain LMG 19424)).